Reading from the N-terminus, the 209-residue chain is Pyroglutamyl-peptidase 1 (209 aa).

Residues E85, C149, and H168 contribute to the active site.

Belongs to the peptidase C15 family. As to quaternary structure, monomer.

It is found in the cytoplasm. The catalysed reaction is Release of an N-terminal pyroglutamyl group from a polypeptide, the second amino acid generally not being Pro.. Inhibited by transition metal ions including Ni(2+), Zn(2+), and Cu(2+) and by sulfhydryl-blocking agents. Removes 5-oxoproline from various penultimate amino acid residues except L-proline. This chain is Pyroglutamyl-peptidase 1 (PGPEP1), found in Homo sapiens (Human).